Here is a 244-residue protein sequence, read N- to C-terminus: 5'-deoxynucleotidase (244 aa).

The enzyme catalyses a 2'-deoxyribonucleoside 5'-phosphate + H2O = a 2'-deoxyribonucleoside + phosphate. Functionally, following host DNA degradation, is responsible for the degradation of 5'-dNMP's to deoxynucleosides that can be further excreted. Active on deoxynucleoside 5'-monophosphates but not active as a phosphatase on ribonucleotides, deoxynucleoside 5'-triphosphates, deoxynucleoside 3'-monophosphates, or deoxyoligonucleotides. The protein is 5'-deoxynucleotidase (dmp) of Escherichia coli (Enterobacteria phage T5).